A 426-amino-acid polypeptide reads, in one-letter code: Potassium channel subfamily K member 2 (426 aa).

Topologically, residues 1–61 are cytoplasmic; that stretch reads MLPSASRERP…TTINVMKWKT (61 aa). 2 important for GNG4 binding and L-glutamate release in astrocytes regions span residues 17–38 and 51–61; these read AAPD…LSFS and DTTINVMKWKT. The chain crosses the membrane as a helical span at residues 62-82; it reads VSTIFLVVVLYLIIGATVFKA. N-linked (GlcNAc...) asparagine glycosylation is found at Asn-110 and Asn-134. Residues 144–170 constitute an intramembrane region (pore-forming); sequence LGSSFFFAGTVITTIGFGNISPRTEGG. Residues Thr-157, Ile-158, Gly-159, and Phe-160 each coordinate K(+). The interval 157–162 is selectivity filter 1; sequence TIGFGN. A helical transmembrane segment spans residues 172 to 192; the sequence is IFCIIYALLGIPLFGFLLAGV. Topologically, residues 193 to 223 are cytoplasmic; the sequence is GDQLGTIFGKGIAKVEDTFIKWNVSQTKIRI. Residues 224–244 form a helical membrane-spanning segment; the sequence is ISTIIFILFGCVLFVALPAII. The segment at residues 253-283 is an intramembrane region (pore-forming); that stretch reads ALDAIYFVVITLTTIGFGDYVAGGSDIEYLD. 4 residues coordinate K(+): Thr-266, Ile-267, Gly-268, and Phe-269. The segment at 266–271 is selectivity filter 2; it reads TIGFGD. The helical transmembrane segment at 288 to 308 threads the bilayer; it reads VVWFWILVGLAYFAAVLSMIG. Residues 309 to 426 lie on the Cytoplasmic side of the membrane; sequence DWLRVISKKT…EEIAVIENIK (118 aa). The segment at 313-326 is interaction with AKAP5; sequence VISKKTKEEVGEFR. Positions 337–385 are essential for chloroform and halothane sensitivity; that stretch reads TAEFKETRRRLSVEIYDKFQRATSIKRKLSAELAGNHNQELTPCRRTLS. A Phosphoserine; by PKA modification is found at Ser-348.

The protein belongs to the two pore domain potassium channel (TC 1.A.1.8) family. Homodimer; disulfide-linked. Forms heterodimers with other 2-pore domain K(+) channel subunits, such as KCNK1, KCNK4, KCNK10 and KCNK18. Interacts with AKAP5; the channel is recruited to postsynaptic microdomains by AKAP5 where it can integrate neurotransmitter receptor signals. Part of a complex composed of AKAP5 and ADRB2. Upon AKAP5 binding, the channel is no longer sensitive to intracellular acidification, membrane stretch or arachidonic acid stimuli. Interacts with POPDC1; the interaction enhances KCNK2 surface expression and is inhibited by cAMP. Interacts (via N-terminus) with G-protein subunit GNG4 (via C-terminus); this interaction confers ion selectivity to L-glutamate and Cl(-) anions. In terms of processing, phosphorylation at Ser-348 controls the reversible conversion from a leak channel to a voltage-dependent channel. In terms of tissue distribution, detected in kidney, adrenal gland and brain where it is preferentially expressed in the amygdala but not found in thalamus, hypothalamus, hippocampus or substantia nigra.

The protein localises to the cell membrane. It is found in the endoplasmic reticulum membrane. The protein resides in the cell projection. It localises to the axon. Its subcellular location is the dendrite. The protein localises to the postsynaptic density membrane. It is found in the sarcolemma. It carries out the reaction K(+)(in) = K(+)(out). It catalyses the reaction L-glutamate(out) = L-glutamate(in). The enzyme catalyses chloride(in) = chloride(out). The catalysed reaction is Rb(+)(in) = Rb(+)(out). It carries out the reaction Cs(+)(in) = Cs(+)(out). With respect to regulation, activated by various stimuli including intracellular acidic pH, mechanical stretch and polyunsaturated fatty acids such as arachidonic acid. Activated by volatile anesthetics such as chloroform, halothane, and isoflurane. Its function is as follows. K(+) channel that conducts voltage-dependent outward rectifying currents upon membrane depolarization. Voltage sensing is coupled to K(+) electrochemical gradient in an 'ion flux gating' mode where outward but not inward ion flow opens the gate. Converts to voltage-independent 'leak' conductance mode upon stimulation by various stimuli including mechanical membrane stretch, acidic pH, heat and lipids. Reversibly converts between a voltage-insensitive K(+) 'leak' channel and a voltage-dependent outward rectifying K(+) channel in a phosphorylation-dependent manner. Homo- and heterodimerizes to form functional channels with distinct regulatory and gating properties. In trigeminal ganglia sensory neurons, the heterodimer of KCNK2/TREK-1 and KCNK18/TRESK inhibits neuronal firing and neurogenic inflammation by stabilizing the resting membrane potential at K(+) equilibrium potential as well as by regulating the threshold of action potentials and the spike frequency. At trigeminal A-beta afferent nerves, the heterodimer of KCNK2/TREK-1 and KCNK4/TRAAK is mostly coexpressed at nodes of Ranvier where it conducts voltage-independent mechanosensitive and thermosensitive currents, allowing rapid action potential repolarization, high speed and high frequence saltatory conduction on myelinated nerves to ensure prompt sensory responses. In hippocampal astrocytes, the heterodimer of KCNK2/TREK-1 and KCNK1/TWIK-1 allows passive K(+) conductance under basal conditions, but changes ion selectivity and becomes permeable to L-glutamate and Cl(-) ions upon binding to G-protein subunit GNG4 in stimulated astrocytes. Mediates rapid L-glutamate release in response to activation of G-protein-coupled receptors, such as F2R and CNR1. In hippocampal pyramidal neurons, the homodimer of KCNK2/TREK-1 contributes to gamma-aminobutyric acid (GABA) B-induced slow inhibitory postsynaptic potential. Associates with AKAP5 and Gs-protein-coupled receptor B2AR at postsynaptic dense bodies and converts to a leak channel no longer sensitive to stimulation by arachidonic acid, acidic pH or mechanical stress, nor inhibited by Gq-coupled receptors but still under the negative control of Gs-coupled receptors. Permeable to other monovalent cations such as Rb(+) and Cs(+). Functionally, does not display channel activity but reduces the channel activity of isoform 1 and isoform 2 and reduces cell surface expression of isoform 2. This is Potassium channel subfamily K member 2 from Homo sapiens (Human).